We begin with the raw amino-acid sequence, 349 residues long: Methylthioribose-1-phosphate isomerase (349 aa).

Substrate is bound by residues 51-53, arginine 94, and glutamine 199; that span reads RGA. Residue aspartate 240 is the Proton donor of the active site. 250–251 contacts substrate; sequence NK.

Belongs to the eIF-2B alpha/beta/delta subunits family. MtnA subfamily. As to quaternary structure, homodimer.

The enzyme catalyses 5-(methylsulfanyl)-alpha-D-ribose 1-phosphate = 5-(methylsulfanyl)-D-ribulose 1-phosphate. The protein operates within amino-acid biosynthesis; L-methionine biosynthesis via salvage pathway; L-methionine from S-methyl-5-thio-alpha-D-ribose 1-phosphate: step 1/6. Its function is as follows. Catalyzes the interconversion of methylthioribose-1-phosphate (MTR-1-P) into methylthioribulose-1-phosphate (MTRu-1-P). In Bacillus cytotoxicus (strain DSM 22905 / CIP 110041 / 391-98 / NVH 391-98), this protein is Methylthioribose-1-phosphate isomerase.